Reading from the N-terminus, the 234-residue chain is Large ribosomal subunit protein uL1 (234 aa).

This sequence belongs to the universal ribosomal protein uL1 family. Part of the 50S ribosomal subunit.

Its function is as follows. Binds directly to 23S rRNA. The L1 stalk is quite mobile in the ribosome, and is involved in E site tRNA release. Protein L1 is also a translational repressor protein, it controls the translation of the L11 operon by binding to its mRNA. This is Large ribosomal subunit protein uL1 from Sodalis glossinidius (strain morsitans).